A 45-amino-acid polypeptide reads, in one-letter code: Photosystem II reaction center protein K (45 aa).

Positions 1-8 (MEAVLLLA) are excised as a propeptide. A helical membrane pass occupies residues 24 to 44 (MPVIPLFFLALAFVWQAAVGF).

It belongs to the PsbK family. PSII is composed of 1 copy each of membrane proteins PsbA, PsbB, PsbC, PsbD, PsbE, PsbF, PsbH, PsbI, PsbJ, PsbK, PsbL, PsbM, PsbT, PsbX, PsbY, PsbZ, Psb30/Ycf12, peripheral proteins PsbO, CyanoQ (PsbQ), PsbU, PsbV and a large number of cofactors. It forms dimeric complexes.

The protein localises to the cellular thylakoid membrane. Its function is as follows. One of the components of the core complex of photosystem II (PSII). PSII is a light-driven water:plastoquinone oxidoreductase that uses light energy to abstract electrons from H(2)O, generating O(2) and a proton gradient subsequently used for ATP formation. It consists of a core antenna complex that captures photons, and an electron transfer chain that converts photonic excitation into a charge separation. The sequence is that of Photosystem II reaction center protein K from Acaryochloris marina (strain MBIC 11017).